Reading from the N-terminus, the 158-residue chain is Large ribosomal subunit protein uL11 (158 aa).

This sequence belongs to the universal ribosomal protein uL11 family. As to quaternary structure, part of the ribosomal stalk of the 50S ribosomal subunit. Interacts with L10 and the large rRNA to form the base of the stalk. L10 forms an elongated spine to which L12 dimers bind in a sequential fashion forming a multimeric L10(L12)X complex.

Forms part of the ribosomal stalk which helps the ribosome interact with GTP-bound translation factors. The protein is Large ribosomal subunit protein uL11 of Methanosphaerula palustris (strain ATCC BAA-1556 / DSM 19958 / E1-9c).